Consider the following 341-residue polypeptide: 1-aminocyclopropane-1-carboxylate deaminase (341 aa).

S1 bears the N-acetylserine mark. K51 is subject to N6-(pyridoxal phosphate)lysine. Residue S78 is the Nucleophile of the active site.

The protein belongs to the ACC deaminase/D-cysteine desulfhydrase family. Homodimer. Pyridoxal 5'-phosphate is required as a cofactor.

The enzyme catalyses 1-aminocyclopropane-1-carboxylate + H2O = 2-oxobutanoate + NH4(+). Functionally, catalyzes a cyclopropane ring-opening reaction, the irreversible conversion of 1-aminocyclopropane-1-carboxylate (ACC) to ammonia and alpha-ketobutyrate. The polypeptide is 1-aminocyclopropane-1-carboxylate deaminase (Cyberlindnera saturnus (Yeast)).